The sequence spans 89 residues: Small ribosomal subunit protein bS18 (89 aa).

This sequence belongs to the bacterial ribosomal protein bS18 family. As to quaternary structure, part of the 30S ribosomal subunit. Forms a tight heterodimer with protein bS6.

Binds as a heterodimer with protein bS6 to the central domain of the 16S rRNA, where it helps stabilize the platform of the 30S subunit. This chain is Small ribosomal subunit protein bS18, found in Phocaeicola vulgatus (strain ATCC 8482 / DSM 1447 / JCM 5826 / CCUG 4940 / NBRC 14291 / NCTC 11154) (Bacteroides vulgatus).